A 471-amino-acid chain; its full sequence is Protein hedgehog (471 aa).

A lipid anchor (N-palmitoyl cysteine) is attached at C85. Ca(2+) is bound by residues E149, E150, D155, T185, E186, D189, and D191. G257 carries Cholesterol glycine ester lipidation.

It belongs to the hedgehog family. In terms of assembly, interacts with shf. Interacts with ptc and CG5504/l(2)tid. The C-terminal part of the hedgehog protein precursor displays an autoproteolysis activity that results in the cleavage of the full-length protein into two parts (N-product and C-product). In addition, the C-terminal part displays a cholesterol transferase activity that results by the covalent attachment of a cholesterol moiety to the C-terminal of the newly generated N-product. The N-product is the active species in both local and long-range signaling, whereas the C-product has no signaling activity. In terms of processing, cholesterylation is required for N-product targeting to lipid rafts and multimerization. Post-translationally, N-palmitoylation by Rasp of the hedgehog N-product, within the secretory pathway, is required for the embryonic and larval patterning activities of the hedgehog signal. As to expression, in embryos, expression starts at stage 5 as a few stripes at the anterior and posterior ends, this expands to 17 stripes during stages 8-11. Expression is also seen in CNS and some PNS cells until stage 13-14, and in foregut, hindgut and salivary glands. In larvae, expression is seen in the posterior compartment of the wing, leg and antennal imaginal disks. In adults, high level of expression in specific regions of the proventriculus and hindgut, with slightly lower levels of expression in the posterior midgut. Relatively low levels of expression in the anterior midgut region.

The protein localises to the nucleus. Its subcellular location is the cytoplasm. The protein resides in the cell membrane. It catalyses the reaction glycyl-L-cysteinyl-[protein] + cholesterol + H(+) = [protein]-C-terminal glycyl cholesterol ester + N-terminal L-cysteinyl-[protein]. Functionally, the C-terminal part of the hedgehog protein precursor displays an autoproteolysis activity that results in the cleavage of the full-length protein into two parts (N-product and C-product). In addition, the C-terminal part displays a cholesterol transferase activity that results by the covalent attachment of a cholesterol moiety to the C-terminal of the newly generated N-product. Once cleaved, the C-product has no signaling activity and diffuses from the cell. Its function is as follows. The dually lipidated hedgehog protein N-product is a morphogen which is essential for a variety of patterning events during development. Establishes the anterior-posterior axis of the embryonic segments and patterns the larval imaginal disks. Binds to the patched (ptc) receptor, which functions in association with smoothened (smo), to activate the transcription of target genes wingless (wg), decapentaplegic (dpp) and ptc. In the absence of hh, ptc represses the constitutive signaling activity of smo through fused (fu). Essential component of a signaling pathway which regulates the Duox-dependent gut immune response to bacterial uracil; required to activate Cad99C-dependent endosome formation, norpA-dependent Ca2+ mobilization and p38 MAPK, which are essential steps in the Duox-dependent production of reactive oxygen species (ROS) in response to intestinal bacterial infection. During photoreceptor differentiation, it up-regulates transcription of Ubr3, which in turn promotes the hh-signaling pathway by mediating the ubiquitination and degradation of cos. The polypeptide is Protein hedgehog (Drosophila melanogaster (Fruit fly)).